The following is a 598-amino-acid chain: Transcriptional repressor tup12 (598 aa).

The disordered stretch occupies residues 118–177 (IASGVVPQSSKTKHGRNSVSFGKYGNAGPFNSDNSSKPLILNNGSSGGTPKNLRSPAIDS). 7 WD repeats span residues 285–325 (EPPI…AMVF), 332–371 (LITL…QQIR), 374–413 (DIAQ…RTVC), 415–454 (WDVE…KVIR), 456–495 (WTSS…NTIK), 510–549 (YKEG…RTIQ), and 552–585 (SPDS…ATGS).

The protein belongs to the WD repeat TUP1 family.

In terms of biological role, transcriptional repressor. The protein is Transcriptional repressor tup12 (tup12) of Schizosaccharomyces pombe (strain 972 / ATCC 24843) (Fission yeast).